We begin with the raw amino-acid sequence, 256 residues long: Ubiquinone/menaquinone biosynthesis C-methyltransferase UbiE (256 aa).

Residues Thr-79, Asp-100, and 128 to 129 (DA) each bind S-adenosyl-L-methionine.

It belongs to the class I-like SAM-binding methyltransferase superfamily. MenG/UbiE family.

It catalyses the reaction a 2-demethylmenaquinol + S-adenosyl-L-methionine = a menaquinol + S-adenosyl-L-homocysteine + H(+). The catalysed reaction is a 2-methoxy-6-(all-trans-polyprenyl)benzene-1,4-diol + S-adenosyl-L-methionine = a 5-methoxy-2-methyl-3-(all-trans-polyprenyl)benzene-1,4-diol + S-adenosyl-L-homocysteine + H(+). The protein operates within quinol/quinone metabolism; menaquinone biosynthesis; menaquinol from 1,4-dihydroxy-2-naphthoate: step 2/2. Its pathway is cofactor biosynthesis; ubiquinone biosynthesis. Methyltransferase required for the conversion of demethylmenaquinol (DMKH2) to menaquinol (MKH2) and the conversion of 2-polyprenyl-6-methoxy-1,4-benzoquinol (DDMQH2) to 2-polyprenyl-3-methyl-6-methoxy-1,4-benzoquinol (DMQH2). This chain is Ubiquinone/menaquinone biosynthesis C-methyltransferase UbiE, found in Pseudomonas fluorescens (strain Pf0-1).